The chain runs to 307 residues: Lactamase-like protein vrtG (307 aa).

H97, H99, D101, and H102 together coordinate Zn(2+). D101 (proton donor/acceptor) is an active-site residue.

It belongs to the metallo-beta-lactamase superfamily. Zn(2+) is required as a cofactor.

It functions in the pathway secondary metabolite biosynthesis; terpenoid biosynthesis. In terms of biological role, lactamase-like protein; part of the gene cluster that mediates the biosynthesis of viridicatumtoxin, a tetracycline-like fungal meroterpenoid with a unique, fused spirobicyclic ring system. The first step of the pathway is the production of the malonamoyl-CoA starter unit for the polyketide synthase vrtA. The aldolase vrtJ may be involved in the synthesis of the malonamate substrate for malonamoyl-CoA synthetase vrtB. The polyketide synthase vrtA then may utilize the malonamoyl-CoA starter unit, followed by sequential condensation of eight malonyl-CoA units to form the polyketide backbone. The cyclization of the last ring could be mediated by the lactamase-like protein vrtG. The proposed post-PKS tailoring steps are a hydroxylation at C5 catalyzed the cytochrome P450 monooxygenase vrtE, a hydroxylation at C12a catalyzed by VrtH and/or VrtI, and an O-methylation by the O-methyltransferase vrtF. VrtC is then proposed to catalyze the transfer of a geranyl group synthesized by vrtD to the aromatic C ring of the tetracyclic polyketide intermediate of viridicatumtoxin to yield previridicatumtoxin. Finally, the cytochrome P450 monooxygenase vrtK catalyzes the spirocyclization of the geranyl moiety of previridicatumtoxin to afford viridicatumtoxin. The protein is Lactamase-like protein vrtG of Penicillium aethiopicum.